Here is a 44-residue protein sequence, read N- to C-terminus: Cytochrome b559 subunit beta (44 aa).

Residues 19-35 (WIAVHTLAVPSVFFLGA) form a helical membrane-spanning segment. Heme is bound at residue H23.

The protein belongs to the PsbE/PsbF family. Heterodimer of an alpha subunit and a beta subunit. PSII is composed of 1 copy each of membrane proteins PsbA, PsbB, PsbC, PsbD, PsbE, PsbF, PsbH, PsbI, PsbJ, PsbK, PsbL, PsbM, PsbT, PsbX, PsbY, PsbZ, Psb30/Ycf12, peripheral proteins PsbO, CyanoQ (PsbQ), PsbU, PsbV and a large number of cofactors. It forms dimeric complexes. The cofactor is heme b.

It is found in the cellular thylakoid membrane. This b-type cytochrome is tightly associated with the reaction center of photosystem II (PSII). PSII is a light-driven water:plastoquinone oxidoreductase that uses light energy to abstract electrons from H(2)O, generating O(2) and a proton gradient subsequently used for ATP formation. It consists of a core antenna complex that captures photons, and an electron transfer chain that converts photonic excitation into a charge separation. This chain is Cytochrome b559 subunit beta, found in Cyanothece sp. (strain PCC 7425 / ATCC 29141).